We begin with the raw amino-acid sequence, 195 residues long: MYLGRFIIIGETTAVYRVSSRSYPNRQIISRDNMLTVVPTSEAAQTNNPYVSYNCMRQGGEKIVIGNGSHVDPIAEKIDRGYPARDALAEALLALDYEKDDYNTPRIAGIVGSSSYVGIIRQDAVIIRSISEPTLVSTYENDAPTTAQLSLKGDIEEIAQKAYELEYEHPVCAAAVTHQGQGESGDIVAQIYNGK.

The protein belongs to the archaeal IMP cyclohydrolase family.

The catalysed reaction is IMP + H2O = 5-formamido-1-(5-phospho-D-ribosyl)imidazole-4-carboxamide. It participates in purine metabolism; IMP biosynthesis via de novo pathway; IMP from 5-formamido-1-(5-phospho-D-ribosyl)imidazole-4-carboxamide: step 1/1. Functionally, catalyzes the cyclization of 5-formylamidoimidazole-4-carboxamide ribonucleotide to IMP. This chain is IMP cyclohydrolase, found in Haloquadratum walsbyi (strain DSM 16790 / HBSQ001).